The following is a 975-amino-acid chain: Cation-chloride cotransporter 1 (975 aa).

Disordered stretches follow at residues Met-1–Arg-29 and Glu-104–His-124. Topologically, residues Met-1 to Met-132 are cytoplasmic. Residues Gly-133–Ile-153 traverse the membrane as a helical segment. Over Arg-154–Gly-167 the chain is Extracellular. A helical membrane pass occupies residues Leu-168–Ile-188. Topologically, residues Ala-189–Ser-214 are cytoplasmic. The chain crosses the membrane as a helical span at residues Ile-215–Val-235. At Glu-236–Gln-273 the chain is on the extracellular side. N-linked (GlcNAc...) asparagine glycosylation occurs at Asn-256. A helical membrane pass occupies residues Val-274–Ile-294. At Asn-295–Arg-296 the chain is on the cytoplasmic side. The helical transmembrane segment at Val-297–Phe-317 threads the bilayer. Topologically, residues Leu-318–Thr-359 are extracellular. The helical transmembrane segment at Tyr-360–Gly-380 threads the bilayer. Topologically, residues Ser-381 to Thr-398 are cytoplasmic. Residues Leu-399–Val-419 form a helical membrane-spanning segment. Over Ala-420 to Thr-434 the chain is Extracellular. A helical membrane pass occupies residues Ile-435 to Ala-455. The Cytoplasmic segment spans residues Leu-456 to His-490. A helical membrane pass occupies residues Ile-491–Leu-511. Over Ile-512–Thr-515 the chain is Extracellular. The chain crosses the membrane as a helical span at residues Val-516–Leu-536. Residues Leu-537–Pro-544 lie on the Cytoplasmic side of the membrane. Residues Arg-545–Met-565 traverse the membrane as a helical segment. The Extracellular segment spans residues Phe-566–Ser-571. A helical transmembrane segment spans residues Phe-572–Lys-592. Residues Ala-593–Thr-975 are Cytoplasmic-facing.

The protein belongs to the SLC12A transporter family. In terms of tissue distribution, expressed in young seedlings cotyledon tips, plant vasculature, root tips and axillary buds. Expressed in root vascular strand in the pericycle and other parenchyma cells bordering xylem vessels. Expressed in the xylem/symplast boundaries of rosette stems, rosette leaves and cauline leaves. Expressed in stipules, trichomes and hydathodes. Expressed in pollen grains.

Its subcellular location is the membrane. Cation/chloride cotransporter that mediates potassium-chloride and sodium-chloride cotransports. Involved in plant development and Cl(-) homeostasis. May be involved in long distance Cl(-) transport. Does not function as an H(+)-dependent cotransporter. This chain is Cation-chloride cotransporter 1 (CCC1), found in Arabidopsis thaliana (Mouse-ear cress).